The primary structure comprises 211 residues: Histidine biosynthesis bifunctional protein HisIE (211 aa).

A phosphoribosyl-AMP cyclohydrolase region spans residues Met-1 to Lys-107. A phosphoribosyl-ATP pyrophosphohydrolase region spans residues Ile-108–Trp-211.

This sequence in the N-terminal section; belongs to the PRA-CH family. In the C-terminal section; belongs to the PRA-PH family.

It is found in the cytoplasm. The catalysed reaction is 1-(5-phospho-beta-D-ribosyl)-ATP + H2O = 1-(5-phospho-beta-D-ribosyl)-5'-AMP + diphosphate + H(+). The enzyme catalyses 1-(5-phospho-beta-D-ribosyl)-5'-AMP + H2O = 1-(5-phospho-beta-D-ribosyl)-5-[(5-phospho-beta-D-ribosylamino)methylideneamino]imidazole-4-carboxamide. The protein operates within amino-acid biosynthesis; L-histidine biosynthesis; L-histidine from 5-phospho-alpha-D-ribose 1-diphosphate: step 2/9. Its pathway is amino-acid biosynthesis; L-histidine biosynthesis; L-histidine from 5-phospho-alpha-D-ribose 1-diphosphate: step 3/9. This Staphylococcus epidermidis (strain ATCC 35984 / DSM 28319 / BCRC 17069 / CCUG 31568 / BM 3577 / RP62A) protein is Histidine biosynthesis bifunctional protein HisIE.